Reading from the N-terminus, the 474-residue chain is Trehalose-6-phosphate synthase (474 aa).

Arg-10 lines the D-glucose 6-phosphate pocket. 22–23 (GG) provides a ligand contact to UDP-alpha-D-glucose. Residues Tyr-77 and Asp-131 each contribute to the D-glucose 6-phosphate site. The UDP-alpha-D-glucose site is built by Arg-263 and Lys-268. Arg-301 lines the D-glucose 6-phosphate pocket. Residues Phe-340 and 366–370 (LVAKE) contribute to the UDP-alpha-D-glucose site.

It belongs to the glycosyltransferase 20 family. In terms of assembly, homotetramer.

It carries out the reaction D-glucose 6-phosphate + UDP-alpha-D-glucose = alpha,alpha-trehalose 6-phosphate + UDP + H(+). It participates in glycan biosynthesis; trehalose biosynthesis. Its function is as follows. Probably involved in the osmoprotection via the biosynthesis of trehalose. Catalyzes the transfer of glucose from UDP-alpha-D-glucose (UDP-Glc) to D-glucose 6-phosphate (Glc-6-P) to form trehalose-6-phosphate. Acts with retention of the anomeric configuration of the UDP-sugar donor. This is Trehalose-6-phosphate synthase from Pseudomonas savastanoi (Pseudomonas syringae pv. savastanoi).